The primary structure comprises 215 residues: Small ribosomal subunit protein uS3 (215 aa).

Residues 39–107 enclose the KH type-2 domain; sequence VRQYLQKRLA…PVHINIEEIR (69 aa).

This sequence belongs to the universal ribosomal protein uS3 family. As to quaternary structure, part of the 30S ribosomal subunit. Forms a tight complex with proteins S10 and S14.

In terms of biological role, binds the lower part of the 30S subunit head. Binds mRNA in the 70S ribosome, positioning it for translation. This chain is Small ribosomal subunit protein uS3, found in Nitrosomonas eutropha (strain DSM 101675 / C91 / Nm57).